A 353-amino-acid polypeptide reads, in one-letter code: uncharacterized protein (353 aa).

Mn(2+)-binding residues include Asp-212, Asp-223, His-287, Glu-316, and Glu-330.

The protein belongs to the peptidase M24B family. Requires Mn(2+) as cofactor.

This is an uncharacterized protein from Bacillus subtilis (strain 168).